A 223-amino-acid chain; its full sequence is Riboflavin kinase (223 aa).

The tract at residues 1–89 (MHRINALKHL…KHIFCGDEDK (89 aa)) is unknown. The interval 90–223 (VELYGNVITG…IMIEDRSACE (134 aa)) is riboflavin kinase. Residue 99 to 104 (GLGEGQ) coordinates CDP. Threonine 128 and asparagine 130 together coordinate Mg(2+). Residues serine 185 and glutamate 193 each contribute to the FMN site. Position 198-201 (198-201 (VHLR)) interacts with CDP.

This sequence belongs to the archaeal riboflavin kinase family. Mg(2+) serves as cofactor.

It carries out the reaction riboflavin + CTP = CDP + FMN + H(+). Its pathway is cofactor biosynthesis; FMN biosynthesis; FMN from riboflavin (CTP route): step 1/1. Its function is as follows. Catalyzes the CTP-dependent phosphorylation of riboflavin (vitamin B2) to form flavin mononucleotide (FMN). In Methanococcoides burtonii (strain DSM 6242 / NBRC 107633 / OCM 468 / ACE-M), this protein is Riboflavin kinase (ribK).